Here is a 617-residue protein sequence, read N- to C-terminus: Arrestin domain-containing protein B (617 aa).

In terms of domain architecture, C2 spans 1–109 (MDNRGLRLFI…ATFGQTDKWL (109 aa)). The Ca(2+) site is built by D20, D27, D76, D78, and D84.

It belongs to the arrestin family. The cofactor is Ca(2+).

This chain is Arrestin domain-containing protein B (adcB), found in Dictyostelium discoideum (Social amoeba).